Reading from the N-terminus, the 117-residue chain is MARVTVEDCVDKVPNRFELVMLASHRAREIAAGDPLTIDRDNDKNPVVSLREIADETQSADDLRERLIESHQTQIEVDEPEEDAMALLQGVEQDRPAQDDMSEEQMLRALMEAQGQK.

It belongs to the RNA polymerase subunit omega family. The RNAP catalytic core consists of 2 alpha, 1 beta, 1 beta' and 1 omega subunit. When a sigma factor is associated with the core the holoenzyme is formed, which can initiate transcription.

The catalysed reaction is RNA(n) + a ribonucleoside 5'-triphosphate = RNA(n+1) + diphosphate. Promotes RNA polymerase assembly. Latches the N- and C-terminal regions of the beta' subunit thereby facilitating its interaction with the beta and alpha subunits. This is DNA-directed RNA polymerase subunit omega from Jannaschia sp. (strain CCS1).